The chain runs to 1051 residues: Protein transport protein Sec16B (1051 aa).

Positions 1 to 23 are enriched in polar residues; sequence MEPWVPQTQGRTTGPSRDTNRGL. Residues 1 to 109 are disordered; that stretch reads MEPWVPQTQG…PYQRYHTPTP (109 aa). Over residues 39 to 63 the composition is skewed to basic and acidic residues; the sequence is DKYHQWQDAHKNSKSQQDLRDDHQQ. Residues 64–77 show a composition bias toward polar residues; sequence SHSVSRSGEWSQPV. Phosphoserine is present on residues Ser-70 and Ser-137. Residues 157–203 are disordered; the sequence is EKHNGTFGANSDTQFQFTSKNPYRDSPASVSGQEQPGEFFPESEAQK. Polar residues predominate over residues 163–177; sequence FGANSDTQFQFTSKN. Ser-182, Ser-185, and Ser-245 each carry phosphoserine. A central conserved domain (CCD); required for localization to endoplasmic reticulum exit sites region spans residues 263 to 708; sequence APMRFYVPHV…KHKDLEQNRT (446 aa). Positions 703–715 are enriched in basic and acidic residues; it reads LEQNRTGAPRDPD. 3 disordered regions span residues 703–754, 798–820, and 850–1051; these read LEQN…LWST, SGAS…EDML, and TPAA…TQPC. Residues 737–754 are compositionally biased toward polar residues; that stretch reads GHQNYSEDSEYSSTLWST. Low complexity predominate over residues 798–809; it reads SGASGSSVAVTG. Thr-850 is modified (phosphothreonine). 5 positions are modified to phosphoserine: Ser-860, Ser-863, Ser-866, Ser-874, and Ser-875. The span at 877-897 shows a compositional bias: basic and acidic residues; the sequence is GADKPSHPDASQKGKLGDGKN. Residues 900–920 are compositionally biased toward low complexity; sequence SSGFGWFSWFRSKPASSVSTS. Residues 921 to 932 are compositionally biased toward acidic residues; sequence GDEDSSDSSDSE. A compositionally biased stretch (low complexity) spans 936–947; it reads RASSPHHASPGL. Positions 984–993 are enriched in gly residues; it reads EGMGIGGFSG. Residues 1022–1037 are compositionally biased toward polar residues; sequence NPSQVPQLPTASSLNR.

Belongs to the SEC16 family. As to quaternary structure, SEC16A and SEC16B are each present in multiple copies in a heteromeric complex. Interacts with TFG. Interacts with SEC13. As to expression, liver.

Its subcellular location is the endoplasmic reticulum membrane. The protein resides in the golgi apparatus membrane. In terms of biological role, plays a role in the organization of the endoplasmic reticulum exit sites (ERES), also known as transitional endoplasmic reticulum (tER). Required for secretory cargo traffic from the endoplasmic reticulum to the Golgi apparatus. Involved in peroxisome biogenesis. Regulates the transport of peroxisomal biogenesis factors PEX3 and PEX16 from the ER to peroxisomes. The sequence is that of Protein transport protein Sec16B (Sec16b) from Mus musculus (Mouse).